Consider the following 268-residue polypeptide: Tryptophan synthase alpha chain (268 aa).

Active-site proton acceptor residues include glutamate 49 and aspartate 60.

This sequence belongs to the TrpA family. In terms of assembly, tetramer of two alpha and two beta chains.

The catalysed reaction is (1S,2R)-1-C-(indol-3-yl)glycerol 3-phosphate + L-serine = D-glyceraldehyde 3-phosphate + L-tryptophan + H2O. It functions in the pathway amino-acid biosynthesis; L-tryptophan biosynthesis; L-tryptophan from chorismate: step 5/5. Its function is as follows. The alpha subunit is responsible for the aldol cleavage of indoleglycerol phosphate to indole and glyceraldehyde 3-phosphate. The sequence is that of Tryptophan synthase alpha chain from Salmonella agona (strain SL483).